We begin with the raw amino-acid sequence, 279 residues long: MTIDRYAVIGNPISHSRSPAIHAEFARQTGQQLSYEALLAPLDGFRDAVERFRRAGGRGMNVTVPFKLEAFALTDRCAPRASAAGAVNTLAFGPDGIFGDNTDGAGLIRDIVHNLDRPLERQRVLLLGAGGAARGVLLPLLAARPASLTLANRSVDKAHALAAAFRSHAPDVALDACSFVDLAGRVFDVVINATAASLANEAPQLPPGLYAANALAYDMMYGCGDTPFLAAARSDGATQRADGLGMLVEQAAESFLLWRGVRPDTAAVLAALRRQLDGG.

Shikimate-binding positions include 16–18 (SRS) and threonine 63. Lysine 67 (proton acceptor) is an active-site residue. The shikimate site is built by asparagine 88 and aspartate 103. NADP(+) is bound by residues 128–132 (GAGGA) and methionine 219. Tyrosine 221 contacts shikimate. Residue glycine 243 coordinates NADP(+).

Belongs to the shikimate dehydrogenase family. As to quaternary structure, homodimer.

It catalyses the reaction shikimate + NADP(+) = 3-dehydroshikimate + NADPH + H(+). The protein operates within metabolic intermediate biosynthesis; chorismate biosynthesis; chorismate from D-erythrose 4-phosphate and phosphoenolpyruvate: step 4/7. Functionally, involved in the biosynthesis of the chorismate, which leads to the biosynthesis of aromatic amino acids. Catalyzes the reversible NADPH linked reduction of 3-dehydroshikimate (DHSA) to yield shikimate (SA). In Aromatoleum aromaticum (strain DSM 19018 / LMG 30748 / EbN1) (Azoarcus sp. (strain EbN1)), this protein is Shikimate dehydrogenase (NADP(+)).